The primary structure comprises 680 residues: Anosmin-1 (680 aa).

The N-terminal stretch at 1 to 24 (MVPGVPGAVLTLCLWLAASSGCLA) is a signal peptide. Intrachain disulfides connect C49–C83, C53–C77, C86–C105, C90–C101, and C116–C120. N71 is a glycosylation site (N-linked (GlcNAc...) asparagine). One can recognise a WAP domain in the interval 127–176 (LLVKQGDCPAPEKASGFAAACVESCEVDNECSGVKKCCSNGCGHTCQVPK). Fibronectin type-III domains follow at residues 186–287 (PRKE…SKDP), 292–400 (APAN…THAT), 425–523 (PTRP…TPPC), and 550–658 (KPEN…LPPS). N-linked (GlcNAc...) asparagine glycosylation is found at N209, N300, N470, N553, and N564. The segment at 642–680 (EGPATIKTFRTPELPPSSAHRSHLKHRHPHHYKPSPERY) is disordered. A compositionally biased stretch (basic residues) spans 661 to 674 (HRSHLKHRHPHHYK).

As to quaternary structure, interacts with FGFR1; this interaction does not interfere with FGF2-binding to FGFR1. Binds heparin. Heparin may promote or interfere with ANOS1-FGFR1-FGF2 complex formation depending on the sequential order of its binding to the various constituents. For instance, heparin-ANOS1 interaction favors subsequent binding to pre-existing binary FGFR1-FGF2 complex, while heparin-FGF2 complex does not interact with ANOS1-FGFR1. Post-translationally, N-glycosylated. May be proteolytically cleaved at the cell surface and released from the cell surface. Expressed in the cerebellum (at protein level).

It localises to the cell membrane. The protein resides in the secreted. Functionally, has a dual branch-promoting and guidance activity, which may play an important role in the patterning of mitral and tufted cell collaterals to the olfactory cortex. Chemoattractant for fetal olfactory epithelial cells. The sequence is that of Anosmin-1 from Homo sapiens (Human).